Consider the following 663-residue polypeptide: UvrABC system protein B (663 aa).

The region spanning 26–414 (DGLESGLAKQ…DNVAEQVVRP (389 aa)) is the Helicase ATP-binding domain. Residue 39-46 (GVTGSGKT) participates in ATP binding. Residues 92 to 115 (YYDYYQPEAYVPASDTFIEKDASI) carry the Beta-hairpin motif. The region spanning 430 to 596 (QVDDLMSEIR…GINKSVEDIL (167 aa)) is the Helicase C-terminal domain. Positions 624–659 (VKQINALEKQMYSHAQNMEFELAAKIRDEYLLLKEQ) constitute a UVR domain.

It belongs to the UvrB family. Forms a heterotetramer with UvrA during the search for lesions. Interacts with UvrC in an incision complex.

The protein resides in the cytoplasm. In terms of biological role, the UvrABC repair system catalyzes the recognition and processing of DNA lesions. A damage recognition complex composed of 2 UvrA and 2 UvrB subunits scans DNA for abnormalities. Upon binding of the UvrA(2)B(2) complex to a putative damaged site, the DNA wraps around one UvrB monomer. DNA wrap is dependent on ATP binding by UvrB and probably causes local melting of the DNA helix, facilitating insertion of UvrB beta-hairpin between the DNA strands. Then UvrB probes one DNA strand for the presence of a lesion. If a lesion is found the UvrA subunits dissociate and the UvrB-DNA preincision complex is formed. This complex is subsequently bound by UvrC and the second UvrB is released. If no lesion is found, the DNA wraps around the other UvrB subunit that will check the other stand for damage. The polypeptide is UvrABC system protein B (Legionella pneumophila subsp. pneumophila (strain Philadelphia 1 / ATCC 33152 / DSM 7513)).